Reading from the N-terminus, the 453-residue chain is Ribosomal protein uS12 methylthiotransferase RimO (453 aa).

The MTTase N-terminal domain maps to 4-120; the sequence is TSVHIVSLGC…IADHLRVLME (117 aa). Residues C13, C49, C83, C161, C165, and C168 each contribute to the [4Fe-4S] cluster site. Residues 147-377 enclose the Radical SAM core domain; sequence STPPYSAYLK…MEEQAVISHE (231 aa). The TRAM domain occupies 380–450; it reads QTLVGSLQEV…DYDLFAEVIS (71 aa).

Belongs to the methylthiotransferase family. RimO subfamily. The cofactor is [4Fe-4S] cluster.

The protein resides in the cytoplasm. It catalyses the reaction L-aspartate(89)-[ribosomal protein uS12]-hydrogen + (sulfur carrier)-SH + AH2 + 2 S-adenosyl-L-methionine = 3-methylsulfanyl-L-aspartate(89)-[ribosomal protein uS12]-hydrogen + (sulfur carrier)-H + 5'-deoxyadenosine + L-methionine + A + S-adenosyl-L-homocysteine + 2 H(+). Its function is as follows. Catalyzes the methylthiolation of an aspartic acid residue of ribosomal protein uS12. This chain is Ribosomal protein uS12 methylthiotransferase RimO, found in Syntrophus aciditrophicus (strain SB).